Consider the following 341-residue polypeptide: Dimethylsulfoniopropionate lyase 7 (341 aa).

Basic and acidic residues-rich tracts occupy residues 1–10 and 319–328; these read MAGKDRKTIE and ERKLAKDRQK. 2 disordered regions span residues 1 to 24 and 319 to 341; these read MAGK…GGRF and ERKL…AFDA.

Belongs to the aspartate/glutamate racemases family. ALMA1 subfamily. As to quaternary structure, homotetramer.

The catalysed reaction is S,S-dimethyl-beta-propiothetin = acrylate + dimethyl sulfide + H(+). Its function is as follows. Mediates cleavage of dimethylsulfoniopropionate (DMSP) into dimethyl sulfide (DMS) and acrylate. DMS is the principal form by which sulfur is transported from oceans to the atmosphere and is a key component of the ocean sulfur cycle. The protein is Dimethylsulfoniopropionate lyase 7 of Emiliania huxleyi (strain CCMP1516).